We begin with the raw amino-acid sequence, 291 residues long: MAATRALPAGLGELEVLAVGTVLLMEALSGISLNGLTIFSFCKTPDLRTPSNLLVLSLALADTGISLNALVAAVSSLLRRWPHGSEGCQVHGFQGFATALASICGSAAVAWGRYHHYCTRRQLAWDTAIPLVLFVWMSSAFWASLPLMGWGHYDYEPVGTCCTLDYSRGDRNFISFLFTMAFFNFLVPLFITHTSYRFMEQKFSRSGHLPVNTTLPGRMLLLGWGPYALLYLYAAIADVSFISPKLQMVPALIAKTMPTINAINYALHREMVCRGTWQCLSPQKSKKDRTQ.

The Extracellular segment spans residues 1–15 (MAATRALPAGLGELE). The chain crosses the membrane as a helical span at residues 16–36 (VLAVGTVLLMEALSGISLNGL). Topologically, residues 37-52 (TIFSFCKTPDLRTPSN) are cytoplasmic. The helical transmembrane segment at 53-73 (LLVLSLALADTGISLNALVAA) threads the bilayer. At 74-91 (VSSLLRRWPHGSEGCQVH) the chain is on the extracellular side. A disulfide bridge connects residues cysteine 88 and cysteine 162. A helical membrane pass occupies residues 92–112 (GFQGFATALASICGSAAVAWG). Residues 113–130 (RYHHYCTRRQLAWDTAIP) lie on the Cytoplasmic side of the membrane. A helical transmembrane segment spans residues 131–151 (LVLFVWMSSAFWASLPLMGWG). Residues 152-175 (HYDYEPVGTCCTLDYSRGDRNFIS) are Extracellular-facing. Residues 176–196 (FLFTMAFFNFLVPLFITHTSY) traverse the membrane as a helical segment. The Cytoplasmic portion of the chain corresponds to 197–219 (RFMEQKFSRSGHLPVNTTLPGRM). Residues 220-240 (LLLGWGPYALLYLYAAIADVS) form a helical membrane-spanning segment. Topologically, residues 241–247 (FISPKLQ) are extracellular. Residues 248–268 (MVPALIAKTMPTINAINYALH) form a helical membrane-spanning segment. Lysine 255 is modified (N6-(retinylidene)lysine). Residues 269 to 291 (REMVCRGTWQCLSPQKSKKDRTQ) are Cytoplasmic-facing.

This sequence belongs to the G-protein coupled receptor 1 family. Opsin subfamily. Post-translationally, covalently binds all-trans- and 11-cis-retinal.

Its subcellular location is the membrane. Receptor for all-trans- and 11-cis-retinal. Binds preferentially to the former and may catalyze the isomerization of the chromophore by a retinochrome-like mechanism. In Mus musculus (Mouse), this protein is RPE-retinal G protein-coupled receptor (Rgr).